The sequence spans 359 residues: MSTENTLSVADLARENVRNLIPYQSARRLGGNGDVWLNANEFPTAVEFQLTQQTLNRYPECQPKAVIENYAQYAGVKPEQVLVSRGADEGIELMIRAFCEPGKDAILYCPPTYGMYSVSAETIGVARRTVPTLENWQLDLQGIYDNLDGAKVVFVCSPNNPTGQLINPQDLRTLLELTRGKAMVVADEAYIEFCPQATLAGWLVEYPHLVILRTLSKAFALAGLRCGFTLANEEVINLLLKVIAPYPLSTPVADIAAQALSPRGINAMRERVRLIVQERQHLVNGLQQAACLEHVFDSETNYILARFTASSSVFKSLWDQGIILRDQNKQPSLSGCLRITVGTRQENQRVIDALRAEPV.

Residue Lys-217 is modified to N6-(pyridoxal phosphate)lysine.

It belongs to the class-II pyridoxal-phosphate-dependent aminotransferase family. Histidinol-phosphate aminotransferase subfamily. As to quaternary structure, homodimer. It depends on pyridoxal 5'-phosphate as a cofactor.

It catalyses the reaction L-histidinol phosphate + 2-oxoglutarate = 3-(imidazol-4-yl)-2-oxopropyl phosphate + L-glutamate. It functions in the pathway amino-acid biosynthesis; L-histidine biosynthesis; L-histidine from 5-phospho-alpha-D-ribose 1-diphosphate: step 7/9. This chain is Histidinol-phosphate aminotransferase, found in Salmonella arizonae (strain ATCC BAA-731 / CDC346-86 / RSK2980).